The following is a 689-amino-acid chain: Glycine--tRNA ligase beta subunit (689 aa).

It belongs to the class-II aminoacyl-tRNA synthetase family. As to quaternary structure, tetramer of two alpha and two beta subunits.

The protein localises to the cytoplasm. It catalyses the reaction tRNA(Gly) + glycine + ATP = glycyl-tRNA(Gly) + AMP + diphosphate. The protein is Glycine--tRNA ligase beta subunit of Escherichia coli O17:K52:H18 (strain UMN026 / ExPEC).